Consider the following 145-residue polypeptide: Bacilliredoxin BH2759 (145 aa).

The protein belongs to the bacilliredoxin family.

This is Bacilliredoxin BH2759 from Halalkalibacterium halodurans (strain ATCC BAA-125 / DSM 18197 / FERM 7344 / JCM 9153 / C-125) (Bacillus halodurans).